Consider the following 185-residue polypeptide: TATA-box-binding protein 3 (185 aa).

2 tandem repeats follow at residues 7–84 (IENV…ANKL) and 100–178 (VQNI…RKEF).

Belongs to the TBP family.

Its function is as follows. General factor that plays a role in the activation of archaeal genes transcribed by RNA polymerase. Binds specifically to the TATA box promoter element which lies close to the position of transcription initiation. The chain is TATA-box-binding protein 3 from Methanosarcina acetivorans (strain ATCC 35395 / DSM 2834 / JCM 12185 / C2A).